The following is a 641-amino-acid chain: E3 ubiquitin-protein ligase TRIM47 (641 aa).

The RING-type zinc finger occupies 9–58 (CPICLEPLREPVTLPCGHNFCLACLGALWPHRSAGGTGGSGGPARCPLCQ). Thr-72 carries the phosphothreonine modification. The segment at 81 to 123 (QGSVPGPMSAPASGSTRGATPEPSAPSAPPPAPEPSAPCAPEQ) is disordered. The segment covering 103-118 (PSAPSAPPPAPEPSAP) has biased composition (pro residues). A B box-type zinc finger spans residues 181–221 (LEESLCPRHLRPLERYCRVERVCLCEACATQDHRGHELVPL). Zn(2+)-binding residues include Cys-186, His-189, Cys-208, and His-213. Positions 305–325 (QGDLRRQEEQRSRLSKARHNL) form a coiled coil. Position 393 is a phosphoserine (Ser-393). Positions 396–416 (DGLQKLGSEDVESQDPDSTSL) are disordered. In terms of domain architecture, B30.2/SPRY spans 413–634 (STSLLESEAP…LQIGPLKKSC (222 aa)). Ser-464 bears the Phosphoserine mark. Position 585 is an omega-N-methylarginine (Arg-585). Residue Ser-591 is modified to Phosphoserine.

It belongs to the TRIM/RBCC family. As to expression, expressed in hepatocytes, expression is increased in fatty livers.

It localises to the cytoplasm. The protein resides in the nucleus. It carries out the reaction S-ubiquitinyl-[E2 ubiquitin-conjugating enzyme]-L-cysteine + [acceptor protein]-L-lysine = [E2 ubiquitin-conjugating enzyme]-L-cysteine + N(6)-ubiquitinyl-[acceptor protein]-L-lysine.. Its pathway is protein modification; protein ubiquitination. Functionally, E3 ubiquitin-protein ligase that mediates the ubiquitination and proteasomal degradation of CYLD. The chain is E3 ubiquitin-protein ligase TRIM47 from Mus musculus (Mouse).